The sequence spans 323 residues: SPbeta prophage-derived uncharacterized protein YorG (323 aa).

Residues threonine 222–isoleucine 272 are a coiled coil.

In Bacillus subtilis (strain 168), this protein is SPbeta prophage-derived uncharacterized protein YorG (yorG).